Consider the following 488-residue polypeptide: Patatin-like protein 7 (488 aa).

Residues 23 to 49 (QRGGDGATAASKSANDYNNNDSLLTDM) are disordered. Over residues 32–47 (ASKSANDYNNNDSLLT) the composition is skewed to polar residues. Residues 101–301 (LSIDGGGMRG…AMSNPTAAAI (201 aa)) enclose the PNPLA domain. Residues 105–110 (GGGMRG) carry the GXGXXG motif. Ser145 functions as the Nucleophile in the catalytic mechanism.

It belongs to the patatin family. Highly expressed in roots and at lower levels in leaves, stems, flowers and siliques.

The protein localises to the cell membrane. Its function is as follows. Possesses non-specific lipolytic acyl hydrolase (LAH) activity. Catalyzes the hydrolysis of the galactolipids monogalactosyldiacylglycerol (MGDG) and digalactosyldiacylglycerol (DGDG), and the phoshpolipids phosphatidylcholine (PC), phosphatidylethanolamine (PE), phosphatidylglycerol (PG), phosphatidic acid (PA), phosphatidylserine (PS). Favors the release of fatty acid at the sn-2 position for PC. Possesses acyl-CoA thioesterase activity. Negatively affects disease resistance to the necrotic fungal pathogen Botrytis cinerea and the avirulent bacteria Pseudomonas syringae by promoting cell death and reducing the efficiency of the hypersensitive response, respectively. However, PLP2 contributes to resistance to cucumber mosaic virus (CMV), an obligate parasite inducing hypersensitive response. May negatively regulate oxylipin production, possibly via participating in membrane repair that includes removal of oxidatively modified lipids. Enzymatic products of PLP2 may influence cellulose content and cell elongation. The sequence is that of Patatin-like protein 7 (PLP7) from Arabidopsis thaliana (Mouse-ear cress).